The following is a 134-amino-acid chain: Large ribosomal subunit protein eL14z (134 aa).

The protein belongs to the eukaryotic ribosomal protein eL14 family.

The sequence is that of Large ribosomal subunit protein eL14z (RPL14A) from Arabidopsis thaliana (Mouse-ear cress).